The following is a 173-amino-acid chain: Co-chaperone protein HscB (173 aa).

Residues 2–74 (DYFTLLGMPN…LSRAEYMLSL (73 aa)) form the J domain.

This sequence belongs to the HscB family. In terms of assembly, interacts with HscA and stimulates its ATPase activity. Interacts with IscU.

Its function is as follows. Co-chaperone involved in the maturation of iron-sulfur cluster-containing proteins. Seems to help targeting proteins to be folded toward HscA. The protein is Co-chaperone protein HscB of Proteus mirabilis (strain HI4320).